The chain runs to 384 residues: Dual-specificity RNA methyltransferase RlmN (384 aa).

The Proton acceptor role is filled by E105. The Radical SAM core domain maps to 111-350; sequence EDDRATLCVS…TIVRKTRGDD (240 aa). Residues C118 and C355 are joined by a disulfide bond. 3 residues coordinate [4Fe-4S] cluster: C125, C129, and C132. Residues 179 to 180, S211, 233 to 235, and N312 each bind S-adenosyl-L-methionine; these read GE and SLH. C355 functions as the S-methylcysteine intermediate in the catalytic mechanism.

The protein belongs to the radical SAM superfamily. RlmN family. [4Fe-4S] cluster serves as cofactor.

The protein localises to the cytoplasm. It catalyses the reaction adenosine(2503) in 23S rRNA + 2 reduced [2Fe-2S]-[ferredoxin] + 2 S-adenosyl-L-methionine = 2-methyladenosine(2503) in 23S rRNA + 5'-deoxyadenosine + L-methionine + 2 oxidized [2Fe-2S]-[ferredoxin] + S-adenosyl-L-homocysteine. The enzyme catalyses adenosine(37) in tRNA + 2 reduced [2Fe-2S]-[ferredoxin] + 2 S-adenosyl-L-methionine = 2-methyladenosine(37) in tRNA + 5'-deoxyadenosine + L-methionine + 2 oxidized [2Fe-2S]-[ferredoxin] + S-adenosyl-L-homocysteine. Functionally, specifically methylates position 2 of adenine 2503 in 23S rRNA and position 2 of adenine 37 in tRNAs. m2A2503 modification seems to play a crucial role in the proofreading step occurring at the peptidyl transferase center and thus would serve to optimize ribosomal fidelity. The chain is Dual-specificity RNA methyltransferase RlmN from Shigella flexneri serotype 5b (strain 8401).